We begin with the raw amino-acid sequence, 700 residues long: Polyphosphate kinase (700 aa).

N45 is a binding site for ATP. The Mg(2+) site is built by R373 and R403. The PLD phosphodiesterase 1 domain occupies 428 to 462; the sequence is PGMKIHAKLLLITRREEQGFVRYAHIGTGNFHERT. Catalysis depends on H433, which acts as the Phosphohistidine intermediate. Residues Y466, R562, and H590 each contribute to the ATP site. The 31-residue stretch at 585–615 folds into the PLD phosphodiesterase 2 domain; that stretch reads DRFLEHPRVLVVHNDGDPQVFISSADWMERN.

This sequence belongs to the polyphosphate kinase 1 (PPK1) family. It depends on Mg(2+) as a cofactor. An intermediate of this reaction is the autophosphorylated ppk in which a phosphate is covalently linked to a histidine residue through a N-P bond.

It catalyses the reaction [phosphate](n) + ATP = [phosphate](n+1) + ADP. Catalyzes the reversible transfer of the terminal phosphate of ATP to form a long-chain polyphosphate (polyP). The sequence is that of Polyphosphate kinase from Vibrio vulnificus (strain YJ016).